We begin with the raw amino-acid sequence, 396 residues long: Protein GTS1 (396 aa).

The Arf-GAP domain occupies 14–141 (DRELKELINS…FRYDEIKPED (128 aa)). The segment at 30–53 (CGECGNFYPTWCSVNLGVFLCGRC) adopts a C4-type zinc-finger fold. Residues 148–161 (DFDGESDRFDERNR) are compositionally biased toward basic and acidic residues. 2 disordered regions span residues 148–194 (DFDG…SGSR) and 233–266 (KSSSSRNSVSAAATTSTPPLPRRRATTSGPQPAI). Residue S153 is modified to Phosphoserine. At Y181 the chain carries Phosphotyrosine. Residues S184 and S187 each carry the phosphoserine modification. In terms of domain architecture, UBA spans 193–234 (SRYSRQLAELKDMGFGDTNKNLDALSSAHGNINRAIDYLEKS). Positions 234 to 249 (SSSSRNSVSAAATTST) are enriched in low complexity. Phosphoserine is present on S240. T249 carries the phosphothreonine modification.

The protein localises to the nucleus. Its function is as follows. Appears to modulate the timing of budding to obtain an appropriate cell size independent of the DNA replication cycle. Transcription factor involved in both heat resistance and flocculation. The sequence is that of Protein GTS1 (GTS1) from Saccharomyces cerevisiae (strain ATCC 204508 / S288c) (Baker's yeast).